The chain runs to 119 residues: Probable cyclase otaY (119 aa).

This sequence belongs to the aurE cyclase family.

Its pathway is mycotoxin biosynthesis. Probable cyclase; part of the gene cluster that mediates the biosynthesis of ochratoxin A (OTA), a mycotoxin composed of a chlorinated type I polyketide dihydroisocoumarin moiety linked to L-phenylalanine, and demonstrated to have nephrotoxic, immunotoxic, genotoxic, neurotoxic, and teratogenic properties. OtaY is probably involved in the polyketide cyclization. The pathway begins with the highly reducing polyketide synthase otaA that catalyzes the formation of the isocoumarin group during the initial stages of biosynthesis, starting from one acetate and 4 malonate units, to originate the characteristic pentaketide skeleton 7-methylmellein (7-MM) of the OTA molecule. The newly identified cyclase otaY might be involved in the polyketide cyclization reaction during the initial steps of the OTA biosynthesis. 7-MM is then oxidized into 7-carboxymellein (also called ochratoxin beta) by the cytochrome P450 monooxygenase otaC. The NRPS encoded by the otaB gene is involved in the linking of phenylalanine to the dihydroisocoumarin ring. The reaction catalyzed by NRPS results in the production of ochratoxin B (OTB), which is the non-chlorinated analog of OTA and which subsequently serves as the substrate of the halogenase otaD for chlorination activity to form the final molecular structure of OTA, containing a chlorine atom in the C-5 position of the molecule. The chain is Probable cyclase otaY from Aspergillus niger (strain ATCC MYA-4892 / CBS 513.88 / FGSC A1513).